The chain runs to 350 residues: tRNA-splicing endonuclease (350 aa).

Active-site residues include Tyr-286, His-297, and Lys-328.

Belongs to the tRNA-intron endonuclease family. Archaeal long subfamily. Homodimer.

The enzyme catalyses pretRNA = a 3'-half-tRNA molecule with a 5'-OH end + a 5'-half-tRNA molecule with a 2',3'-cyclic phosphate end + an intron with a 2',3'-cyclic phosphate and a 5'-hydroxyl terminus.. Its function is as follows. Endonuclease that removes tRNA introns. Cleaves pre-tRNA at the 5'- and 3'-splice sites to release the intron. The products are an intron and two tRNA half-molecules bearing 2',3' cyclic phosphate and 5'-OH termini. Recognizes a pseudosymmetric substrate in which 2 bulged loops of 3 bases are separated by a stem of 4 bp. This Methanosarcina barkeri (strain Fusaro / DSM 804) protein is tRNA-splicing endonuclease.